Here is a 1002-residue protein sequence, read N- to C-terminus: Vacuolar protein sorting-associated protein 18 homolog (1002 aa).

Phosphoserine is present on Ser-344. The CHCR repeat unit spans residues 650–804 (LMAQGSRLEV…DIKGTNDVKK (155 aa)). A coiled-coil region spans residues 827-880 (FEKIDNFKEAICDALRDYNQRIQELQREMAETTEQTDRVTAELQQLRQHSLTVE). Residues 885 to 924 (CEICEMMLLVKPFFIFICGHKFHSDCLEKHVVPLLTKEQC) form an RING-type; degenerate zinc finger.

This sequence belongs to the VPS18 family. As to quaternary structure, component of the class C core vacuole/endosome tethering (CORVET) complex composed of at least Vps8, dor/Vps18, car/Vps33A and Vps16A; unlike in other species, Vps11 is not part of the Drosophila complex. Due to the reduced number of components the Drosophila CORVET complex is often referred to as the miniCORVET complex. Interacts with car/Vps33A. Interacts with ema. Component of the homotypic fusion and vacuole protein sorting (HOPS) complex, composed of Vps16A, car/Vps33A, dor/Vps18, Vps39, Vps11 and lt/Vps41. The tethering complex core made up of Vps16A, car/Vps33A and dor/Vps18 and shared by both HOPS and CORVET, preferentially associates with CORVET-specific Vps8 over HOPS-specific lt/Vps41. Interacts with Syx17 (via SNARE domain); the interaction may involve multiple components of the HOPS complex and may promote assembly of the Syx17-Snap29-Vamp7 trans-SNARE complex.

It localises to the early endosome. The protein resides in the late endosome membrane. The protein localises to the lysosome membrane. Its subcellular location is the cytoplasmic vesicle. It is found in the autophagosome. Its function is as follows. Core component of the class C core vacuole/endosome tethering (CORVET) and the homotypic fusion and vacuole protein sorting (HOPS) tethering complexes involved in endo-lysosomal vesicle trafficking and lysosome biogenesis. The CORVET complex facilitates docking and fusion of endosomal vesicles during endosome maturation, acts upstream of HOPS, but is not involved in autophagic flux. The CORVET complex may cooperate with the early endosomal tether Rbsn-5 to mediate endosomal fusion. The HOPS complex facilitates docking and fusion of lysosomes with late endosomes and several other types of vesicles. The HOPS complex is also involved in autophagy and crinophagy (the elimination of unused secretory granules through their fusion with lysosomes). The HOPS complex mediates autophagocitic flux, probably by binding autophagosome-associated Syx17/syntaxin 17, promoting assembly of the trans-SNARE complex and instigating autophagosome-lysosome fusion. Independent of Syx17/syntaxin 17, HOPS is involved in biosynthetic transport to lysosomes and lysosome-related organelles such as eye-pigment granules. Required for endocytic degradation of boss/bride of sevenless and N/Notch in developing ommatidia. Required for autophagocytosis-dependent remodeling of myofibrils and transverse-tubules (T-tubules) during metamorphosis. In larval neuromuscular junctions, essential for endosomal sorting that traffics old or dysfunctional synaptic vesicle proteins through a degradative endolysosomal route. Required to maintain normal levels of rush, which functions in endosome formation and trafficking. The sequence is that of Vacuolar protein sorting-associated protein 18 homolog from Drosophila melanogaster (Fruit fly).